A 59-amino-acid chain; its full sequence is Small ribosomal subunit protein bS21 (59 aa).

The interval Gly-27–Ala-59 is disordered. Basic and acidic residues predominate over residues Glu-31–Ser-42. Residues Val-43 to Ala-59 show a composition bias toward basic residues.

The protein belongs to the bacterial ribosomal protein bS21 family.

In Carboxydothermus hydrogenoformans (strain ATCC BAA-161 / DSM 6008 / Z-2901), this protein is Small ribosomal subunit protein bS21.